A 249-amino-acid polypeptide reads, in one-letter code: MMEKPEGLKLIDENGRRIDGRKKYELRPIKMKVGVLKNANGSAYIEWGRNKIIAAVYGPRELHSKHLQRPDRAILRVRYNMAPFSVEERKKPGPDRRSIEISKVIKGALEPALILEMFPRTSIDVFIEVLQADAGTRVAGITAASLALADAGIPMRDLVAACAAGKIEGEIVLDLNKEEDNYGEADVPVAIMPLKNDITLLQMDGYLTKEEFIEAVRLAIKGAKAVYQKQREALKEKYLKIAQEVEESE.

The protein belongs to the RNase PH family. Rrp41 subfamily. As to quaternary structure, component of the archaeal exosome complex. Forms a hexameric ring-like arrangement composed of 3 Rrp41-Rrp42 heterodimers. The hexameric ring associates with a trimer of Rrp4 and/or Csl4 subunits.

The protein resides in the cytoplasm. Catalytic component of the exosome, which is a complex involved in RNA degradation. Has 3'-&gt;5' exoribonuclease activity. Can also synthesize heteromeric RNA-tails. This Pyrococcus horikoshii (strain ATCC 700860 / DSM 12428 / JCM 9974 / NBRC 100139 / OT-3) protein is Exosome complex component Rrp41.